Reading from the N-terminus, the 336-residue chain is D-alanine--D-alanine ligase (336 aa).

One can recognise an ATP-grasp domain in the interval 124–330 (KMWFSALGIP…FTQYLSLVIN (207 aa)). An ATP-binding site is contributed by 154–209 (ALEKWGSIFVKAASQGSSVGCYKVDEASKVLGVLKDAFGYAPYVIVEKTIKARELE). The Mg(2+) site is built by Asp284, Glu297, and Asn299.

The protein belongs to the D-alanine--D-alanine ligase family. It depends on Mg(2+) as a cofactor. Mn(2+) serves as cofactor.

The protein resides in the cytoplasm. The enzyme catalyses 2 D-alanine + ATP = D-alanyl-D-alanine + ADP + phosphate + H(+). The protein operates within cell wall biogenesis; peptidoglycan biosynthesis. Cell wall formation. In Shewanella oneidensis (strain ATCC 700550 / JCM 31522 / CIP 106686 / LMG 19005 / NCIMB 14063 / MR-1), this protein is D-alanine--D-alanine ligase.